The following is a 548-amino-acid chain: (S)-beta-macrocarpene synthase (548 aa).

Mg(2+) is bound by residues aspartate 302 and aspartate 306. Substrate contacts are provided by aspartate 302, aspartate 306, arginine 443, and asparagine 446. The short motif at 302 to 306 (DDTLD) is the DDXXD motif element. Mg(2+)-binding residues include asparagine 446, serine 450, and glutamate 454.

It belongs to the terpene synthase family. Monomer. Mg(2+) serves as cofactor. Requires Mn(2+) as cofactor. As to expression, expressed in roots. Not detected in leaves, unless damaged by herbivory or infected by fungi.

Its subcellular location is the cytoplasm. The enzyme catalyses (S)-beta-bisabolene = (S)-beta-macrocarpene. It carries out the reaction (2E,6E)-farnesyl diphosphate = (S)-beta-bisabolene + diphosphate. The catalysed reaction is (2E)-geranyl diphosphate = (4S)-limonene + diphosphate. It catalyses the reaction (2E)-geranyl diphosphate = beta-myrcene + diphosphate. The enzyme catalyses (2E)-geranyl diphosphate = terpinolene + diphosphate. It carries out the reaction (2E)-geranyl diphosphate + H2O = (S)-linalool + diphosphate. It functions in the pathway secondary metabolite biosynthesis; terpenoid biosynthesis. Involved in the biosynthesis of the bicyclic sesquiterpene (S)-beta-macrocarpene. Can use both geranyl diphosphate and farnesyl diphosphate as substrate, but not geranylgeranyl diphosphate. Produces mainly (S)-beta-macrocarpene, but also smaller amounts of beta-bisabolene and (E)-beta-farnesene when used with farnesyl diphosphate as substrate. In the presence of geranyl diphosphate, produces the acyclic monoterpenes beta-myrcene and linalool along with minor amounts of the cyclic compounds limonene, alpha-thujene, sabinene and alpha-terpinolene. May be involved in plant defense. The protein is (S)-beta-macrocarpene synthase of Zea mays (Maize).